Consider the following 199-residue polypeptide: MRIRLLFAPVSCLLLVCCADSSALRWIQQPSATRNTPTIAFFQVTFDRYNTHLLETRLHAQTLEFYHHDQTWTARDIHFTRYDGNGRASVRGHAGVLLTDCEGTVFYLGKKVDCFFPHEGLRLEGRAFRWENTRALFTSDHFSPVRISDASGAVVTGVGLCVNARTKRFVFQNGVHIDVDLDSFAKTRASRYAAPNLSP.

This is an uncharacterized protein from Treponema pallidum (strain Nichols).